Consider the following 362-residue polypeptide: Heat-inducible transcription repressor HrcA (362 aa).

This sequence belongs to the HrcA family.

Negative regulator of class I heat shock genes (grpE-dnaK-dnaJ and groELS operons). Prevents heat-shock induction of these operons. This Nitrobacter hamburgensis (strain DSM 10229 / NCIMB 13809 / X14) protein is Heat-inducible transcription repressor HrcA.